The primary structure comprises 447 residues: ATP-dependent protease ATPase subunit HslU (447 aa).

ATP contacts are provided by residues Ile18, 60 to 65, Asp259, Glu325, and Arg397; that span reads GVGKTE.

This sequence belongs to the ClpX chaperone family. HslU subfamily. As to quaternary structure, a double ring-shaped homohexamer of HslV is capped on each side by a ring-shaped HslU homohexamer. The assembly of the HslU/HslV complex is dependent on binding of ATP.

The protein localises to the cytoplasm. Its function is as follows. ATPase subunit of a proteasome-like degradation complex; this subunit has chaperone activity. The binding of ATP and its subsequent hydrolysis by HslU are essential for unfolding of protein substrates subsequently hydrolyzed by HslV. HslU recognizes the N-terminal part of its protein substrates and unfolds these before they are guided to HslV for hydrolysis. The polypeptide is ATP-dependent protease ATPase subunit HslU (Burkholderia pseudomallei (strain 668)).